Consider the following 494-residue polypeptide: Aspartyl/glutamyl-tRNA(Asn/Gln) amidotransferase subunit B (494 aa).

This sequence belongs to the GatB/GatE family. GatB subfamily. In terms of assembly, heterotrimer of A, B and C subunits.

It carries out the reaction L-glutamyl-tRNA(Gln) + L-glutamine + ATP + H2O = L-glutaminyl-tRNA(Gln) + L-glutamate + ADP + phosphate + H(+). It catalyses the reaction L-aspartyl-tRNA(Asn) + L-glutamine + ATP + H2O = L-asparaginyl-tRNA(Asn) + L-glutamate + ADP + phosphate + 2 H(+). Allows the formation of correctly charged Asn-tRNA(Asn) or Gln-tRNA(Gln) through the transamidation of misacylated Asp-tRNA(Asn) or Glu-tRNA(Gln) in organisms which lack either or both of asparaginyl-tRNA or glutaminyl-tRNA synthetases. The reaction takes place in the presence of glutamine and ATP through an activated phospho-Asp-tRNA(Asn) or phospho-Glu-tRNA(Gln). The protein is Aspartyl/glutamyl-tRNA(Asn/Gln) amidotransferase subunit B of Synechococcus sp. (strain CC9902).